Consider the following 236-residue polypeptide: EP300-interacting inhibitor of differentiation 2 (236 aa).

A compositionally biased stretch (polar residues) spans Met1–Ala15. A disordered region spans residues Met1–Ser102. 2 stretches are compositionally biased toward low complexity: residues Arg32–Ala68 and Ala75–Ser102. Omega-N-methylarginine is present on residues Arg63 and Arg79. Positions Arg170–Ala190 form a coiled coil.

In terms of assembly, heterodimer with EID2B. Interacts with the C-terminus of EP300. Interacts with HDAC1 and HDAC2. Interacts with SMAD2, SMAD4 and with the MH2 domain of SMAD3. Expressed in heart, brain, kidney and pancreas. Not detected in placenta.

The protein resides in the nucleus. In terms of biological role, interacts with EP300 and acts as a repressor of MYOD-dependent transcription and muscle differentiation. Inhibits EP300 histone acetyltransferase activity. Acts as a repressor of TGFB/SMAD transcriptional responses. May act as a repressor of the TGFB/SMAD3-dependent signaling by selectively blocking formation of TGFB-induced SMAD3-SMAD4 complex. This chain is EP300-interacting inhibitor of differentiation 2, found in Mus musculus (Mouse).